Here is an 88-residue protein sequence, read N- to C-terminus: Cell division topological specificity factor (88 aa).

This sequence belongs to the MinE family.

Its function is as follows. Prevents the cell division inhibition by proteins MinC and MinD at internal division sites while permitting inhibition at polar sites. This ensures cell division at the proper site by restricting the formation of a division septum at the midpoint of the long axis of the cell. This chain is Cell division topological specificity factor, found in Shewanella denitrificans (strain OS217 / ATCC BAA-1090 / DSM 15013).